A 401-amino-acid chain; its full sequence is 8-amino-7-oxononanoate synthase (401 aa).

A substrate-binding site is contributed by Arg19. 106 to 107 (GY) lines the pyridoxal 5'-phosphate pocket. His131 provides a ligand contact to substrate. The pyridoxal 5'-phosphate site is built by Ser176, His204, and Thr233. The residue at position 236 (Lys236) is an N6-(pyridoxal phosphate)lysine. Thr350 provides a ligand contact to substrate.

It belongs to the class-II pyridoxal-phosphate-dependent aminotransferase family. BioF subfamily. In terms of assembly, homodimer. The cofactor is pyridoxal 5'-phosphate.

It catalyses the reaction 6-carboxyhexanoyl-[ACP] + L-alanine + H(+) = (8S)-8-amino-7-oxononanoate + holo-[ACP] + CO2. It functions in the pathway cofactor biosynthesis; biotin biosynthesis. In terms of biological role, catalyzes the decarboxylative condensation of pimeloyl-[acyl-carrier protein] and L-alanine to produce 8-amino-7-oxononanoate (AON), [acyl-carrier protein], and carbon dioxide. This chain is 8-amino-7-oxononanoate synthase, found in Pseudomonas aeruginosa (strain LESB58).